Consider the following 2179-residue polypeptide: Genome polyprotein (2179 aa).

Disordered stretches follow at residues 503-531, 623-678, 703-738, and 753-847; these read FSKD…PTGD, QPQK…YPIQ, RAKK…GDQF, and EPSV…PPKM. 2 stretches are compositionally biased toward polar residues: residues 630–642 and 659–678; these read DTPS…QPFH and TTFA…YPIQ. Residues 758 to 770 are compositionally biased toward polar residues; the sequence is SEDTSSQSYISTE. Positions 783–806 are enriched in low complexity; the sequence is SEESTQLSQLSSSSNDSPENNENT. Over residues 819-831 the composition is skewed to acidic residues; that stretch reads EISEVEDEVDGMT. The CCHC-type zinc finger occupies 1112–1125; it reads CFTCGKIGHFSRNC. D1226 acts as the For protease activity; shared with dimeric partner in catalysis. The Reverse transcriptase domain maps to 1409-1591; that stretch reads QQFDLIEPSD…NKIQFLGMDF (183 aa). Positions 1479, 1542, and 1543 each coordinate Mg(2+). Disordered stretches follow at residues 1822–1848, 2114–2144, and 2160–2179; these read QRRT…KLSH, NIVK…KNKC, and YSTK…EPCV. Low complexity predominate over residues 1827–1840; the sequence is SSSTKSKADSSQST. Over residues 2120–2144 the composition is skewed to basic residues; sequence PRKRKGKAKSRSSTRSEKRRAKNKC. The span at 2162–2179 shows a compositional bias: polar residues; it reads TKPSTPSWTQDSSSEPCV.

This sequence belongs to the Petuviruses genome polyprotein family.

It catalyses the reaction DNA(n) + a 2'-deoxyribonucleoside 5'-triphosphate = DNA(n+1) + diphosphate. Encodes presumably for at least four polypeptides: Movement protein (MP), capsid protein (CP), Protease (PR), and reverse transcriptase (RT). The protein is Genome polyprotein of Petunia vein clearing virus (isolate Shepherd) (PVCV).